A 340-amino-acid polypeptide reads, in one-letter code: MDSGSVAAERPRRTPSRQRLPSSGCGVPARPGVSTLPGGRSWLRPRGRAARASPLLFLLLVPSPRLAATATATAPRRTLAERSRPGLVLPAAALGAGRNALGRLRLGARRVAALASSRRELSLSAKCHQLEHRKENLPLSVSRQLYFDTHALVCLLEANGFTIQQAEIIVSALVKITETNMNIIYKDMVSKMQQEIALQQVLSKIANVKKDMVILEKSEFSALRAENEKIKLELHQLKQQVMDEVTKVRTDTKLNFNLEKSRVKELYSLNEKKMLELRTEIVSLHAQQDRALTQTDRKIETEVAGLKTMLEAHKLDTIKYLAGSVFTCLTVALGFYRLWI.

Residues 1–44 are disordered; the sequence is MDSGSVAAERPRRTPSRQRLPSSGCGVPARPGVSTLPGGRSWLR. The Mitochondrial intermembrane portion of the chain corresponds to 1–54; the sequence is MDSGSVAAERPRRTPSRQRLPSSGCGVPARPGVSTLPGGRSWLRPRGRAARASP. A helical transmembrane segment spans residues 55–74; sequence LLFLLLVPSPRLAATATATA. Residues 75 to 316 lie on the Mitochondrial matrix side of the membrane; that stretch reads PRRTLAERSR…KTMLEAHKLD (242 aa). A coiled-coil region spans residues 197 to 291; the sequence is ALQQVLSKIA…VSLHAQQDRA (95 aa). N6-acetyllysine is present on K204. Residues 317 to 339 form a helical membrane-spanning segment; the sequence is TIKYLAGSVFTCLTVALGFYRLW. Residue I340 is a topological domain, mitochondrial intermembrane.

It belongs to the CCDC90 family. In terms of assembly, interacts (via coiled coil regions) with MCU; the interaction is direct. Interacts with SMDT1/EMRE; the interaction is direct. Interacts with PPIF.

It localises to the mitochondrion inner membrane. Key regulator of mitochondrial calcium uniporter (MCU) required for calcium entry into mitochondrion. Plays a direct role in uniporter-mediated calcium uptake via a direct interaction with MCU. Probably involved in the assembly of the membrane components of the uniporter complex (uniplex). In Mus musculus (Mouse), this protein is Mitochondrial calcium uniporter regulator 1.